The primary structure comprises 236 residues: 2-C-methyl-D-erythritol 4-phosphate cytidylyltransferase (236 aa).

It belongs to the IspD/TarI cytidylyltransferase family. IspD subfamily. Homodimer.

The enzyme catalyses 2-C-methyl-D-erythritol 4-phosphate + CTP + H(+) = 4-CDP-2-C-methyl-D-erythritol + diphosphate. Its pathway is isoprenoid biosynthesis; isopentenyl diphosphate biosynthesis via DXP pathway; isopentenyl diphosphate from 1-deoxy-D-xylulose 5-phosphate: step 2/6. Functionally, catalyzes the formation of 4-diphosphocytidyl-2-C-methyl-D-erythritol from CTP and 2-C-methyl-D-erythritol 4-phosphate (MEP). This chain is 2-C-methyl-D-erythritol 4-phosphate cytidylyltransferase, found in Escherichia coli O17:K52:H18 (strain UMN026 / ExPEC).